We begin with the raw amino-acid sequence, 107 residues long: Probable monothiol glutaredoxin 2 (107 aa).

Positions 7–107 constitute a Glutaredoxin domain; that stretch reads LEFIQNAIKK…LEKMLKDVVV (101 aa). Residue Lys-24 coordinates glutathione. Cys-32 contributes to the [2Fe-2S] cluster binding site. Residues Arg-61, Phe-73, and 86–87 each bind glutathione; that span reads CD.

Belongs to the glutaredoxin family. Monothiol subfamily.

In Rickettsia prowazekii (strain Madrid E), this protein is Probable monothiol glutaredoxin 2 (grxC2).